A 170-amino-acid polypeptide reads, in one-letter code: 4-hydroxyphenylacetate 3-monooxygenase reductase component (170 aa).

Belongs to the non-flavoprotein flavin reductase family. HpaC subfamily. Homodimer. 4-HPA 3-monooxygenase consists of a reductase component HpaC and an oxygenase component HpaB.

The catalysed reaction is a reduced flavin + NAD(+) = an oxidized flavin + NADH + 2 H(+). Its pathway is aromatic compound metabolism; 4-hydroxyphenylacetate degradation; pyruvate and succinate semialdehyde from 4-hydroxyphenylacetate: step 1/7. Functionally, catalyzes the reduction of free flavins (FMN, FAD and riboflavin) by NADH. Subsequently, the reduced flavins diffuse to the large HpaB component or to other electron acceptors such as cytochrome c and Fe(3+) ion. This is 4-hydroxyphenylacetate 3-monooxygenase reductase component (hpaC) from Salmonella typhimurium (strain LT2 / SGSC1412 / ATCC 700720).